We begin with the raw amino-acid sequence, 436 residues long: Tol-Pal system protein TolB (436 aa).

The first 28 residues, 1 to 28, serve as a signal peptide directing secretion; that stretch reads MMKCSFFRAILVAVGLMAAAVVATPANA.

It belongs to the TolB family. The Tol-Pal system is composed of five core proteins: the inner membrane proteins TolA, TolQ and TolR, the periplasmic protein TolB and the outer membrane protein Pal. They form a network linking the inner and outer membranes and the peptidoglycan layer.

The protein localises to the periplasm. Part of the Tol-Pal system, which plays a role in outer membrane invagination during cell division and is important for maintaining outer membrane integrity. The protein is Tol-Pal system protein TolB of Rhizobium etli (strain CIAT 652).